The chain runs to 146 residues: Endothelial differentiation-related factor 1 homolog (146 aa).

The segment at 13–53 is disordered; that stretch reads RKKGSAAQSKSKQAVTAAQRKGEAVETSKKWAAGQNKQHVV. Residues 17–31 show a composition bias toward low complexity; that stretch reads SAAQSKSKQAVTAAQ. Basic and acidic residues predominate over residues 32–41; the sequence is RKGEAVETSK. One can recognise an HTH cro/C1-type domain in the interval 80–134; it reads IQQGRQNKGLTQKDLATKINEKPQIIAEYECGKAIPNNQVMGKIERAIGLKLRGK. A DNA-binding region (H-T-H motif) is located at residues 91-110; that stretch reads QKDLATKINEKPQIIAEYEC.

It localises to the nucleus. Functionally, probable transcriptional coactivator. This Danio rerio (Zebrafish) protein is Endothelial differentiation-related factor 1 homolog (edf1).